The chain runs to 179 residues: MTRLENIYREKVVPVLQKEFNYDSSMQVPGIVKVSLNIGLGAASQNNKLMEEALKELTVIAGQKAVVTRAKKSIASFKLREGMPIGCRVTLRKERMWDFLDKLINFALPRVRDFRGVPDRGFDGRGNFTLGIKEHAIFPEMEADRVENPKGMNITIVTTATTDKEGKLLLDQLGMPFRK.

It belongs to the universal ribosomal protein uL5 family. In terms of assembly, part of the 50S ribosomal subunit; part of the 5S rRNA/L5/L18/L25 subcomplex. Contacts the 5S rRNA and the P site tRNA. Forms a bridge to the 30S subunit in the 70S ribosome.

Functionally, this is one of the proteins that bind and probably mediate the attachment of the 5S RNA into the large ribosomal subunit, where it forms part of the central protuberance. In the 70S ribosome it contacts protein S13 of the 30S subunit (bridge B1b), connecting the 2 subunits; this bridge is implicated in subunit movement. Contacts the P site tRNA; the 5S rRNA and some of its associated proteins might help stabilize positioning of ribosome-bound tRNAs. This Nitratidesulfovibrio vulgaris (strain ATCC 29579 / DSM 644 / CCUG 34227 / NCIMB 8303 / VKM B-1760 / Hildenborough) (Desulfovibrio vulgaris) protein is Large ribosomal subunit protein uL5.